We begin with the raw amino-acid sequence, 948 residues long: Glycine dehydrogenase (decarboxylating) (948 aa).

Lys-696 is modified (N6-(pyridoxal phosphate)lysine).

The protein belongs to the GcvP family. As to quaternary structure, the glycine cleavage system is composed of four proteins: P, T, L and H. Pyridoxal 5'-phosphate serves as cofactor.

It catalyses the reaction N(6)-[(R)-lipoyl]-L-lysyl-[glycine-cleavage complex H protein] + glycine + H(+) = N(6)-[(R)-S(8)-aminomethyldihydrolipoyl]-L-lysyl-[glycine-cleavage complex H protein] + CO2. The glycine cleavage system catalyzes the degradation of glycine. The P protein binds the alpha-amino group of glycine through its pyridoxal phosphate cofactor; CO(2) is released and the remaining methylamine moiety is then transferred to the lipoamide cofactor of the H protein. The polypeptide is Glycine dehydrogenase (decarboxylating) (Akkermansia muciniphila (strain ATCC BAA-835 / DSM 22959 / JCM 33894 / BCRC 81048 / CCUG 64013 / CIP 107961 / Muc)).